Here is a 68-residue protein sequence, read N- to C-terminus: Small ribosomal subunit protein bS18c (68 aa).

It belongs to the bacterial ribosomal protein bS18 family. As to quaternary structure, part of the 30S ribosomal subunit.

The protein localises to the plastid. Its subcellular location is the chloroplast. In Cyanidium caldarium (Red alga), this protein is Small ribosomal subunit protein bS18c (rps18).